The following is a 331-amino-acid chain: Biotin synthase (331 aa).

One can recognise a Radical SAM core domain in the interval 46–275 (YYGKKVKLNM…TKEIRISGGR (230 aa)). The [4Fe-4S] cluster site is built by C64, C68, and C71. C108, C140, C200, and R270 together coordinate [2Fe-2S] cluster.

This sequence belongs to the radical SAM superfamily. Biotin synthase family. In terms of assembly, homodimer. [4Fe-4S] cluster is required as a cofactor. The cofactor is [2Fe-2S] cluster.

The catalysed reaction is (4R,5S)-dethiobiotin + (sulfur carrier)-SH + 2 reduced [2Fe-2S]-[ferredoxin] + 2 S-adenosyl-L-methionine = (sulfur carrier)-H + biotin + 2 5'-deoxyadenosine + 2 L-methionine + 2 oxidized [2Fe-2S]-[ferredoxin]. It participates in cofactor biosynthesis; biotin biosynthesis; biotin from 7,8-diaminononanoate: step 2/2. Catalyzes the conversion of dethiobiotin (DTB) to biotin by the insertion of a sulfur atom into dethiobiotin via a radical-based mechanism. This Lysinibacillus sphaericus (strain C3-41) protein is Biotin synthase.